Here is a 317-residue protein sequence, read N- to C-terminus: Methionyl-tRNA formyltransferase (317 aa).

Position 112–115 (112–115) interacts with (6S)-5,6,7,8-tetrahydrofolate; sequence SLLP.

This sequence belongs to the Fmt family.

It catalyses the reaction L-methionyl-tRNA(fMet) + (6R)-10-formyltetrahydrofolate = N-formyl-L-methionyl-tRNA(fMet) + (6S)-5,6,7,8-tetrahydrofolate + H(+). In terms of biological role, attaches a formyl group to the free amino group of methionyl-tRNA(fMet). The formyl group appears to play a dual role in the initiator identity of N-formylmethionyl-tRNA by promoting its recognition by IF2 and preventing the misappropriation of this tRNA by the elongation apparatus. The protein is Methionyl-tRNA formyltransferase of Histophilus somni (strain 129Pt) (Haemophilus somnus).